We begin with the raw amino-acid sequence, 36 residues long: Turgencin-A (36 aa).

3 cysteine pairs are disulfide-bonded: cysteine 8–cysteine 33, cysteine 12–cysteine 29, and cysteine 17–cysteine 26. A Methionine sulfoxide modification is found at methionine 10. At valine 36 the chain carries Valine amide.

It localises to the secreted. In terms of biological role, has antimicrobial activity against Gram-positive bacteria (C.glutamicum ATCC 13032 (MIC=0.4 uM), B.subtilis ATCC 23857 (MIC=0.4 uM) and S.aureus ATCC 9144 (MIC=6.3 uM)) and Gram-negative bacteria (E.coli ATCC 25922 (MIC=0.8 uM) and P.aeruginosa ATCC 27853 (MIC=1.6 uM)). The sequence is that of Turgencin-A from Synoicum turgens (Colonial ascidian).